Consider the following 285-residue polypeptide: Sulfoquinovosyl glycerol transport system permease protein SmoH (285 aa).

6 helical membrane passes run 21–41, 83–103, 115–135, 150–170, 195–215, and 250–270; these read FIAA…ILFT, FMVA…AAYA, ILSL…VPLF, LILP…VSFF, VVVP…FVNA, and PVIS…IVIF. The ABC transmembrane type-1 domain occupies 79 to 270; it reads LFNSFMVALL…VPVAILIVIF (192 aa).

Belongs to the binding-protein-dependent transport system permease family. In terms of assembly, the complex is probably composed of two ATP-binding proteins (SmoE), two transmembrane proteins (SmoG and SmoH) and a solute-binding protein (SmoF).

The protein localises to the cell inner membrane. Its function is as follows. Part of the ABC transporter complex SmoEFGH involved in sulfoquinovosyl glycerol (SQGro) uptake. Responsible for the translocation of the substrate across the membrane. The protein is Sulfoquinovosyl glycerol transport system permease protein SmoH of Agrobacterium fabrum (strain C58 / ATCC 33970) (Agrobacterium tumefaciens (strain C58)).